We begin with the raw amino-acid sequence, 430 residues long: Enolase (430 aa).

Residue Gln164 participates in (2R)-2-phosphoglycerate binding. Glu208 acts as the Proton donor in catalysis. The Mg(2+) site is built by Asp245, Glu288, and Asp315. (2R)-2-phosphoglycerate-binding residues include Lys340, Arg369, Ser370, and Lys391. Lys340 (proton acceptor) is an active-site residue.

The protein belongs to the enolase family. Requires Mg(2+) as cofactor.

Its subcellular location is the cytoplasm. It localises to the secreted. The protein localises to the cell surface. The enzyme catalyses (2R)-2-phosphoglycerate = phosphoenolpyruvate + H2O. Its pathway is carbohydrate degradation; glycolysis; pyruvate from D-glyceraldehyde 3-phosphate: step 4/5. Catalyzes the reversible conversion of 2-phosphoglycerate (2-PG) into phosphoenolpyruvate (PEP). It is essential for the degradation of carbohydrates via glycolysis. The polypeptide is Enolase (Thermococcus onnurineus (strain NA1)).